Consider the following 128-residue polypeptide: UPF0325 protein YaeH (128 aa).

Belongs to the UPF0325 family.

The chain is UPF0325 protein YaeH from Escherichia fergusonii (strain ATCC 35469 / DSM 13698 / CCUG 18766 / IAM 14443 / JCM 21226 / LMG 7866 / NBRC 102419 / NCTC 12128 / CDC 0568-73).